Consider the following 341-residue polypeptide: HTH-type transcriptional repressor PurR (341 aa).

The region spanning 2-56 (ATIKDVAKRAGVSTTTVSHVINKTRFVAEETKAAVRAAIKELHYSPSAVARSLKV) is the HTH lacI-type domain. The H-T-H motif DNA-binding region spans 4–23 (IKDVAKRAGVSTTTVSHVIN). A DNA-binding region spans residues 48-56 (SAVARSLKV). Hypoxanthine contacts are provided by tyrosine 73, arginine 190, threonine 192, phenylalanine 221, and aspartate 275.

Homodimer.

It functions in the pathway purine metabolism; purine nucleotide biosynthesis [regulation]. Functionally, is the main repressor of the genes involved in the de novo synthesis of purine nucleotides, regulating purB, purC, purEK, purF, purHD, purL, purMN and guaBA expression. PurR is allosterically activated to bind its cognate DNA by binding the purine corepressors, hypoxanthine or guanine, thereby effecting transcription repression. The sequence is that of HTH-type transcriptional repressor PurR from Pectobacterium carotovorum subsp. carotovorum (strain PC1).